The sequence spans 353 residues: ATPase GET3 (353 aa).

Residue 26–33 participates in ATP binding; the sequence is KGGVGKTT. Residue Asp-57 is part of the active site. ATP is bound by residues Glu-244 and Asn-271. Zn(2+) contacts are provided by Cys-284 and Cys-287.

Belongs to the arsA ATPase family. As to quaternary structure, homodimer. Component of the Golgi to ER traffic (GET) complex, which is composed of GET1, GET2 and GET3. Within the complex, GET1 and GET2 form a heterotetramer which is stabilized by phosphatidylinositol binding and which binds to the GET3 homodimer. Interacts with the chloride channel protein GEF1.

The protein localises to the cytoplasm. It localises to the endoplasmic reticulum. The protein resides in the golgi apparatus. Its function is as follows. ATPase required for the post-translational delivery of tail-anchored (TA) proteins to the endoplasmic reticulum. Recognizes and selectively binds the transmembrane domain of TA proteins in the cytosol. This complex then targets to the endoplasmic reticulum by membrane-bound receptors GET1 and GET2, where the tail-anchored protein is released for insertion. This process is regulated by ATP binding and hydrolysis. ATP binding drives the homodimer towards the closed dimer state, facilitating recognition of newly synthesized TA membrane proteins. ATP hydrolysis is required for insertion. Subsequently, the homodimer reverts towards the open dimer state, lowering its affinity for the GET1-GET2 receptor, and returning it to the cytosol to initiate a new round of targeting. Cooperates with the HDEL receptor ERD2 to mediate the ATP-dependent retrieval of resident ER proteins that contain a C-terminal H-D-E-L retention signal from the Golgi to the ER. Involved in low-level resistance to the oxyanions arsenite and arsenate, and in heat tolerance. The polypeptide is ATPase GET3 (Zygosaccharomyces rouxii (strain ATCC 2623 / CBS 732 / NBRC 1130 / NCYC 568 / NRRL Y-229)).